The following is a 158-amino-acid chain: 6,7-dimethyl-8-ribityllumazine synthase (158 aa).

5-amino-6-(D-ribitylamino)uracil is bound by residues Phe22, 57–59, and 81–83; these read AVE and AVI. A (2S)-2-hydroxy-3-oxobutyl phosphate-binding site is contributed by 86–87; sequence GT. His89 acts as the Proton donor in catalysis. Phe114 serves as a coordination point for 5-amino-6-(D-ribitylamino)uracil. Arg128 contributes to the (2S)-2-hydroxy-3-oxobutyl phosphate binding site.

The protein belongs to the DMRL synthase family. Forms an icosahedral capsid composed of 60 subunits, arranged as a dodecamer of pentamers.

The enzyme catalyses (2S)-2-hydroxy-3-oxobutyl phosphate + 5-amino-6-(D-ribitylamino)uracil = 6,7-dimethyl-8-(1-D-ribityl)lumazine + phosphate + 2 H2O + H(+). Its pathway is cofactor biosynthesis; riboflavin biosynthesis; riboflavin from 2-hydroxy-3-oxobutyl phosphate and 5-amino-6-(D-ribitylamino)uracil: step 1/2. Catalyzes the formation of 6,7-dimethyl-8-ribityllumazine by condensation of 5-amino-6-(D-ribitylamino)uracil with 3,4-dihydroxy-2-butanone 4-phosphate. This is the penultimate step in the biosynthesis of riboflavin. The polypeptide is 6,7-dimethyl-8-ribityllumazine synthase (Shewanella pealeana (strain ATCC 700345 / ANG-SQ1)).